Consider the following 379-residue polypeptide: Putative zinc metalloprotease BR1156/BS1330_I1152 (379 aa).

His-33 provides a ligand contact to Zn(2+). Glu-34 is a catalytic residue. His-37 serves as a coordination point for Zn(2+). A run of 4 helical transmembrane segments spans residues 39–61 (LVARWCGIGAQAFSIGFGPELLG), 122–144 (VFAGPAFNIILTIAIFSVFFALY), 305–327 (FDWLIQLMAMLSIGIGLLNLFPL), and 355–377 (IFYRIGFLLVMGFMGFVLFNDLF). The 76-residue stretch at 133–208 (TIAIFSVFFA…LNFTVERDGK (76 aa)) folds into the PDZ domain.

It belongs to the peptidase M50B family. The cofactor is Zn(2+).

The protein localises to the cell inner membrane. The polypeptide is Putative zinc metalloprotease BR1156/BS1330_I1152 (Brucella suis biovar 1 (strain 1330)).